The sequence spans 78 residues: Large ribosomal subunit protein uL29 (78 aa).

Residues 59 to 78 form a disordered region; the sequence is VESERKRGKSLSSTQTQKEE. The segment covering 68–78 has biased composition (polar residues); sequence SLSSTQTQKEE.

This sequence belongs to the universal ribosomal protein uL29 family.

This chain is Large ribosomal subunit protein uL29, found in Synechococcus sp. (strain JA-3-3Ab) (Cyanobacteria bacterium Yellowstone A-Prime).